The chain runs to 1042 residues: Sarcoplasmic/endoplasmic reticulum calcium ATPase 2 (1042 aa).

At 1–48 the chain is on the cytoplasmic side; the sequence is MENAHTKTVEEVLGHFGVNESTGLSLEQVKKLKERWGSNELPAEEGKT. The residue at position 38 (serine 38) is a Phosphoserine. Residues 49-69 traverse the membrane as a helical segment; it reads LLELVIEQFEDLLVRILLLAA. Over 70-89 the chain is Lumenal; that stretch reads CISFVLAWFEEGEETITAFV. Residues 90–110 traverse the membrane as a helical segment; it reads EPFVILLILVANAIVGVWQER. The Cytoplasmic portion of the chain corresponds to 111 to 253; that stretch reads NAENAIEALK…QERTPLQQKL (143 aa). Residues 254-273 traverse the membrane as a helical segment; the sequence is DEFGEQLSKVISLICIAVWI. Over 274 to 295 the chain is Lumenal; the sequence is INIGHFNDPVHGGSWIRGAIYY. 3'-nitrotyrosine occurs at positions 294 and 295. A helical transmembrane segment spans residues 296-313; that stretch reads FKIAVALAVAAIPEGLPA. Residues valine 304, alanine 305, isoleucine 307, and glutamate 309 each contribute to the Ca(2+) site. At 314–756 the chain is on the cytoplasmic side; it reads VITTCLALGT…EEGRAIYNNM (443 aa). Aspartate 351 (4-aspartylphosphate intermediate) is an active-site residue. Mg(2+) contacts are provided by aspartate 351 and threonine 353. Threonine 353 is an ATP binding site. Threonine 441 bears the Phosphothreonine mark. Residues glutamate 442, arginine 489, and lysine 514 each contribute to the ATP site. Serine 531 is subject to Phosphoserine. Residue arginine 559 coordinates ATP. The tract at residues 575-594 is interaction with HAX1; the sequence is MNLEDSANFIKYETNLTFVG. The residue at position 580 (serine 580) is a Phosphoserine. ATP is bound by residues threonine 624, glycine 625, and aspartate 626. A Phosphoserine modification is found at serine 663. The ATP site is built by arginine 677 and lysine 683. Aspartate 702 serves as a coordination point for Mg(2+). Asparagine 705 is an ATP binding site. The helical transmembrane segment at 757–776 threads the bilayer; it reads KQFIRYLISSNVGEVVCIFL. Positions 767 and 770 each coordinate Ca(2+). The Lumenal segment spans residues 777–786; sequence TAALGFPEAL. A helical membrane pass occupies residues 787 to 807; the sequence is IPVQLLWVNLVTDGLPATALG. An interaction with PLN region spans residues 787–807; the sequence is IPVQLLWVNLVTDGLPATALG. An interaction with TMEM64 and PDIA3 region spans residues 788–1042; sequence PVQLLWVNLV…DTNFSDMFWS (255 aa). 3 residues coordinate Ca(2+): asparagine 795, threonine 798, and aspartate 799. Residues 808–827 are Cytoplasmic-facing; that stretch reads FNPPDLDIMNKPPRNPKEPL. Residues 828–850 traverse the membrane as a helical segment; that stretch reads ISGWLFFRYLAIGCYVGAATVGA. Topologically, residues 851–896 are lumenal; that stretch reads AAWWFIAADGGPRVTFYQLSHFLQCKEDNPDFEGVDCAVFESPYPM. Residues cysteine 875 and cysteine 887 are joined by a disulfide bond. The chain crosses the membrane as a helical span at residues 897–916; sequence TMALSVLVTIEMCNALNSLS. Glutamate 907 is a Ca(2+) binding site. Residues 917–929 lie on the Cytoplasmic side of the membrane; it reads ENQSLLRMPPWEN. The helical transmembrane segment at 930–948 threads the bilayer; that stretch reads IWLVGSICLSMSLHFLILY. The interval 931 to 942 is interaction with PLN; that stretch reads WLVGSICLSMSL. Over 949-963 the chain is Lumenal; the sequence is VEPLPLIFQITPLNL. A helical membrane pass occupies residues 964–984; sequence TQWLMVLKISLPVILMDETLK. Residues 985-1042 lie on the Cytoplasmic side of the membrane; the sequence is FVARNYLEPGKECVQPATKSCSFSACTDGISWPFVLLIMPLVIWVYSTDTNFSDMFWS.

Belongs to the cation transport ATPase (P-type) (TC 3.A.3) family. Type IIA subfamily. As to quaternary structure, interacts with sarcolipin (SLN); the interaction inhibits ATP2A2 Ca(2+) affinity. Interacts with phospholamban (PLN); the interaction inhibits ATP2A2 Ca(2+) affinity. Interacts with myoregulin (MRLN). Interacts with ARLN and ERLN; the interactions inhibit ATP2A2 Ca(2+) affinity. Interacts with STRIT1/DWORF; the interaction results in activation of ATP2A2. Interacts with the monomeric forms of SLN, PLN, ARLN, ERLN and STRI1/DWORF. Interacts with HAX1. Interacts with S100A8 and S100A9. Interacts with SLC35G1 and STIM1. Interacts with TMEM203. Interacts with TMEM64 and PDIA3. Interacts with TMX1. Interacts with TMX2. Interacts with VMP1; VMP1 competes with PLN and SLN to prevent them from forming an inhibitory complex with ATP2A2. Interacts with ULK1. Interacts with S100A1 in a Ca(2+)-dependent manner. Interacts with TUNAR. Interacts with FLVCR2; this interaction occurs in the absence of heme and promotes ATP2A2 proteasomal degradation; this complex is dissociated upon heme binding. Interacts with FNIP1. Interacts with TRAM2 (via C-terminus). The cofactor is Mg(2+). Post-translationally, nitrated under oxidative stress. Nitration on the two tyrosine residues inhibits catalytic activity. In terms of processing, serotonylated on Gln residues by TGM2 in response to hypoxia, leading to its inactivation. Detected in heart left ventricle (at protein level). Isoform 2 is highly expressed in heart and slow twitch skeletal muscle. Isoform 1 is widely expressed.

The protein resides in the endoplasmic reticulum membrane. The protein localises to the sarcoplasmic reticulum membrane. It catalyses the reaction Ca(2+)(in) + ATP + H2O = Ca(2+)(out) + ADP + phosphate + H(+). Its activity is regulated as follows. Has different conformational states with differential Ca2+ affinity. The E1 conformational state (active form) shows high Ca(2+) affinity, while the E2 state exhibits low Ca(2+) affinity. Binding of ATP allosterically increases its affinity for subsequent binding of Ca2+. Reversibly inhibited by phospholamban (PLN) at low calcium concentrations. PLN inhibits ATP2A2 Ca(2+) affinity by disrupting its allosteric activation by ATP. Inhibited by sarcolipin (SLN) and myoregulin (MRLN). The inhibition is blocked by VMP1. Enhanced by STRIT1/DWORF; STRIT1 increases activity by displacing sarcolipin (SLN), phospholamban (PLN) and myoregulin (MRLN). Stabilizes SERCA2 in its E2 state. In terms of biological role, this magnesium-dependent enzyme catalyzes the hydrolysis of ATP coupled with the translocation of calcium from the cytosol to the sarcoplasmic reticulum lumen. Involved in autophagy in response to starvation. Upon interaction with VMP1 and activation, controls ER-isolation membrane contacts for autophagosome formation. Also modulates ER contacts with lipid droplets, mitochondria and endosomes. In coordination with FLVCR2 mediates heme-stimulated switching from mitochondrial ATP synthesis to thermogenesis. Involved in the regulation of the contraction/relaxation cycle. Acts as a regulator of TNFSF11-mediated Ca(2+) signaling pathways via its interaction with TMEM64 which is critical for the TNFSF11-induced CREB1 activation and mitochondrial ROS generation necessary for proper osteoclast generation. Association between TMEM64 and SERCA2 in the ER leads to cytosolic Ca(2+) spiking for activation of NFATC1 and production of mitochondrial ROS, thereby triggering Ca(2+) signaling cascades that promote osteoclast differentiation and activation. In Sus scrofa (Pig), this protein is Sarcoplasmic/endoplasmic reticulum calcium ATPase 2 (ATP2A2).